Consider the following 145-residue polypeptide: Cell division protein SepF (145 aa).

It belongs to the SepF family. As to quaternary structure, homodimer. Interacts with FtsZ.

It localises to the cytoplasm. Its function is as follows. Cell division protein that is part of the divisome complex and is recruited early to the Z-ring. Probably stimulates Z-ring formation, perhaps through the cross-linking of FtsZ protofilaments. Its function overlaps with FtsA. The chain is Cell division protein SepF from Lactobacillus acidophilus (strain ATCC 700396 / NCK56 / N2 / NCFM).